A 378-amino-acid polypeptide reads, in one-letter code: Heterogeneous nuclear ribonucleoprotein A3 (378 aa).

Methionine 1 carries the N-acetylmethionine modification. The span at 1-10 (MEVKPPPGRP) shows a compositional bias: pro residues. Residues 1–34 (MEVKPPPGRPQPDSGRRRRRRGEEGHDPKEPEQL) are disordered. A Glycyl lysine isopeptide (Lys-Gly) (interchain with G-Cter in SUMO2) cross-link involves residue lysine 4. Position 14 is a phosphoserine (serine 14). The segment covering 21–34 (RGEEGHDPKEPEQL) has biased composition (basic and acidic residues). The RRM 1 domain occupies 35–118 (RKLFIGGLSF…RAVSREDSVK (84 aa)). A Glycyl lysine isopeptide (Lys-Gly) (interchain with G-Cter in SUMO2) cross-link involves residue lysine 36. Serine 43 carries the post-translational modification Phosphoserine. Arginine 52 is subject to Dimethylated arginine; alternate. The residue at position 52 (arginine 52) is an Omega-N-methylarginine; alternate. At arginine 76 the chain carries Omega-N-methylarginine. Residues serine 112 and serine 116 each carry the phosphoserine modification. A Glycyl lysine isopeptide (Lys-Gly) (interchain with G-Cter in SUMO2) cross-link involves residue lysine 118. Phosphothreonine is present on threonine 124. The region spanning 126–205 (KKIFVGGIKE…CEVKKALSKQ (80 aa)) is the RRM 2 domain. The residue at position 134 (lysine 134) is an N6-acetyllysine; alternate. Lysine 134 participates in a covalent cross-link: Glycyl lysine isopeptide (Lys-Gly) (interchain with G-Cter in SUMO2); alternate. Glycyl lysine isopeptide (Lys-Gly) (interchain with G-Cter in SUMO2) cross-links involve residues lysine 151 and lysine 182. The tract at residues 204 to 225 (KQEMQSAGSQRGRGGGSGNFMG) is disordered. Residues arginine 214, arginine 216, arginine 226, arginine 239, and arginine 246 each carry the omega-N-methylarginine; alternate modification. Asymmetric dimethylarginine; alternate occurs at positions 214, 216, 226, 239, and 246. A compositionally biased stretch (gly residues) spans 214–225 (RGRGGGSGNFMG). Arginine 257 carries the post-translational modification Omega-N-methylarginine. Arginine 286 is modified (asymmetric dimethylarginine). A disordered region spans residues 336–378 (SGQQQSNYGPMKGGSFGGRSSGSPYGGGYGSGGGSGGYGSRRF). A compositionally biased stretch (gly residues) spans 346-378 (MKGGSFGGRSSGSPYGGGYGSGGGSGGYGSRRF). Serine 350 carries the post-translational modification Phosphoserine. Arginine 354 is modified (omega-N-methylarginine). Serine 358 is subject to Phosphoserine. 2 positions are modified to phosphotyrosine: tyrosine 360 and tyrosine 364. A phosphoserine mark is found at serine 366 and serine 370. A Phosphotyrosine modification is found at tyrosine 373. Residue serine 375 is modified to Phosphoserine.

As to quaternary structure, identified in the spliceosome C complex.

The protein localises to the nucleus. In terms of biological role, plays a role in cytoplasmic trafficking of RNA. Binds to the cis-acting response element, A2RE. May be involved in pre-mRNA splicing. The polypeptide is Heterogeneous nuclear ribonucleoprotein A3 (HNRNPA3) (Homo sapiens (Human)).